A 146-amino-acid polypeptide reads, in one-letter code: Replication and maintenance protein (146 aa).

The chain is Replication and maintenance protein (repL) from Bacillus subtilis.